Here is a 388-residue protein sequence, read N- to C-terminus: Succinate--CoA ligase [ADP-forming] subunit beta (388 aa).

Residues 9–245 form the ATP-grasp domain; it reads KALLKKYGVS…KSQENERELK (237 aa). ATP-binding positions include Lys46, 53-55, Glu100, Tyr103, and Glu108; that span reads GRG. Asn200 and Asp214 together coordinate Mg(2+). Substrate is bound by residues Asn265 and 322-324; that span reads GIV.

The protein belongs to the succinate/malate CoA ligase beta subunit family. Heterotetramer of two alpha and two beta subunits. Mg(2+) serves as cofactor.

It carries out the reaction succinate + ATP + CoA = succinyl-CoA + ADP + phosphate. The catalysed reaction is GTP + succinate + CoA = succinyl-CoA + GDP + phosphate. It participates in carbohydrate metabolism; tricarboxylic acid cycle; succinate from succinyl-CoA (ligase route): step 1/1. Functionally, succinyl-CoA synthetase functions in the citric acid cycle (TCA), coupling the hydrolysis of succinyl-CoA to the synthesis of either ATP or GTP and thus represents the only step of substrate-level phosphorylation in the TCA. The beta subunit provides nucleotide specificity of the enzyme and binds the substrate succinate, while the binding sites for coenzyme A and phosphate are found in the alpha subunit. The polypeptide is Succinate--CoA ligase [ADP-forming] subunit beta (Acinetobacter baylyi (strain ATCC 33305 / BD413 / ADP1)).